Consider the following 464-residue polypeptide: UDP-N-acetylmuramoylalanine--D-glutamate ligase (464 aa).

Residue 112–118 (GTDGKTT) participates in ATP binding.

The protein belongs to the MurCDEF family.

Its subcellular location is the cytoplasm. The enzyme catalyses UDP-N-acetyl-alpha-D-muramoyl-L-alanine + D-glutamate + ATP = UDP-N-acetyl-alpha-D-muramoyl-L-alanyl-D-glutamate + ADP + phosphate + H(+). Its pathway is cell wall biogenesis; peptidoglycan biosynthesis. Functionally, cell wall formation. Catalyzes the addition of glutamate to the nucleotide precursor UDP-N-acetylmuramoyl-L-alanine (UMA). This is UDP-N-acetylmuramoylalanine--D-glutamate ligase from Chlorobium phaeobacteroides (strain DSM 266 / SMG 266 / 2430).